The primary structure comprises 486 residues: tRNA-2-methylthio-N(6)-dimethylallyladenosine synthase (486 aa).

The MTTase N-terminal domain occupies 35 to 151; it reads RNLYVESYGC…LPRLLATVDS (117 aa). 6 residues coordinate [4Fe-4S] cluster: C44, C80, C114, C189, C193, and C196. Residues 175-419 form the Radical SAM core domain; it reads NSNGVSAFIS…IDKQRQHSFE (245 aa). The 64-residue stretch at 422-485 folds into the TRAM domain; that stretch reads LKDIGKVYQV…TGTLLGEICT (64 aa).

This sequence belongs to the methylthiotransferase family. MiaB subfamily. As to quaternary structure, monomer. [4Fe-4S] cluster serves as cofactor.

The protein resides in the cytoplasm. It catalyses the reaction N(6)-dimethylallyladenosine(37) in tRNA + (sulfur carrier)-SH + AH2 + 2 S-adenosyl-L-methionine = 2-methylsulfanyl-N(6)-dimethylallyladenosine(37) in tRNA + (sulfur carrier)-H + 5'-deoxyadenosine + L-methionine + A + S-adenosyl-L-homocysteine + 2 H(+). Its function is as follows. Catalyzes the methylthiolation of N6-(dimethylallyl)adenosine (i(6)A), leading to the formation of 2-methylthio-N6-(dimethylallyl)adenosine (ms(2)i(6)A) at position 37 in tRNAs that read codons beginning with uridine. This Amoebophilus asiaticus (strain 5a2) protein is tRNA-2-methylthio-N(6)-dimethylallyladenosine synthase.